Consider the following 132-residue polypeptide: Sec-independent protein translocase protein TatB (132 aa).

The chain crosses the membrane as a helical span at residues 2-22; that stretch reads FDGIGFMELLLIGILGLVVLG. Positions 68–132 are disordered; sequence ENQGLKDLSP…VSANPDKSNR (65 aa). Residues 102-122 show a composition bias toward low complexity; the sequence is TPSASSSAPSESTPSEAPTAE.

It belongs to the TatB family. In terms of assembly, the Tat system comprises two distinct complexes: a TatABC complex, containing multiple copies of TatA, TatB and TatC subunits, and a separate TatA complex, containing only TatA subunits. Substrates initially bind to the TatABC complex, which probably triggers association of the separate TatA complex to form the active translocon.

The protein localises to the cell inner membrane. Functionally, part of the twin-arginine translocation (Tat) system that transports large folded proteins containing a characteristic twin-arginine motif in their signal peptide across membranes. Together with TatC, TatB is part of a receptor directly interacting with Tat signal peptides. TatB may form an oligomeric binding site that transiently accommodates folded Tat precursor proteins before their translocation. In Shewanella woodyi (strain ATCC 51908 / MS32), this protein is Sec-independent protein translocase protein TatB.